Consider the following 880-residue polypeptide: DNA mismatch repair protein MutS (880 aa).

625–632 (GPNMAGKS) is a binding site for ATP.

It belongs to the DNA mismatch repair MutS family.

Its function is as follows. This protein is involved in the repair of mismatches in DNA. It is possible that it carries out the mismatch recognition step. This protein has a weak ATPase activity. The protein is DNA mismatch repair protein MutS of Alkaliphilus oremlandii (strain OhILAs) (Clostridium oremlandii (strain OhILAs)).